Consider the following 486-residue polypeptide: Glutamyl-tRNA(Gln) amidotransferase subunit A (486 aa).

Residues Lys-74 and Ser-149 each act as charge relay system in the active site. Residue Ser-173 is the Acyl-ester intermediate of the active site.

The protein belongs to the amidase family. GatA subfamily. As to quaternary structure, heterotrimer of A, B and C subunits.

It catalyses the reaction L-glutamyl-tRNA(Gln) + L-glutamine + ATP + H2O = L-glutaminyl-tRNA(Gln) + L-glutamate + ADP + phosphate + H(+). In terms of biological role, allows the formation of correctly charged Gln-tRNA(Gln) through the transamidation of misacylated Glu-tRNA(Gln) in organisms which lack glutaminyl-tRNA synthetase. The reaction takes place in the presence of glutamine and ATP through an activated gamma-phospho-Glu-tRNA(Gln). The protein is Glutamyl-tRNA(Gln) amidotransferase subunit A of Prochlorococcus marinus (strain SARG / CCMP1375 / SS120).